A 338-amino-acid polypeptide reads, in one-letter code: Cell division protein ZipA (338 aa).

Residues 1 to 2 are Periplasmic-facing; it reads MS. A helical transmembrane segment spans residues 3 to 23; sequence LREWLIAIGTLVIIGIVIDGV. At 24–338 the chain is on the cytoplasmic side; sequence RRMRRARKES…FERKQRSQRA (315 aa). Positions 33–192 are disordered; that stretch reads SMAISSGMGA…RKNQPLAGAN (160 aa). 2 stretches are compositionally biased toward basic and acidic residues: residues 70-81 and 138-162; these read TLEDRGYLKRDM and EVDR…RAEE.

The protein belongs to the ZipA family. Interacts with FtsZ via their C-terminal domains.

It localises to the cell inner membrane. Functionally, essential cell division protein that stabilizes the FtsZ protofilaments by cross-linking them and that serves as a cytoplasmic membrane anchor for the Z ring. Also required for the recruitment to the septal ring of downstream cell division proteins. The polypeptide is Cell division protein ZipA (Marinobacter nauticus (strain ATCC 700491 / DSM 11845 / VT8) (Marinobacter aquaeolei)).